The chain runs to 472 residues: Eukaryotic translation initiation factor 2 subunit 3 (472 aa).

An N-acetylalanine modification is found at Ala-2. The residue at position 16 (Ser-16) is a Phosphoserine. Positions 39-248 constitute a tr-type G domain; the sequence is QATINIGTIG…IVKKIPVPPR (210 aa). The interval 48-55 is G1; that stretch reads GHVAHGKS. 51–56 serves as a coordination point for GTP; that stretch reads AHGKST. Residues 76–80 are G2; that stretch reads NITIK. The segment at 134–137 is G3; it reads DCPG. GTP is bound by residues 190-193 and 225-227; these read NKID and SAQ. A G4 region spans residues 190 to 193; sequence NKID. The segment at 225–227 is G5; that stretch reads SAQ. Residues 457–469 form an interacts with CDC123 region; that stretch reads GQIRRGVTIKPTV.

It belongs to the TRAFAC class translation factor GTPase superfamily. Classic translation factor GTPase family. EIF2G subfamily. In terms of assembly, eukaryotic translation initiation factor 2 eIF2 is a heterotrimeric complex composed of an alpha (EIF2S1), a beta (EIF2S2) and a gamma (EIF2S3) chain. eIF2 is member of the 43S pre-initiation complex (43S PIC). Interacts (via C-terminus) with CDC123; the interaction is direct.

The protein resides in the cytoplasm. It localises to the cytosol. The enzyme catalyses GTP + H2O = GDP + phosphate + H(+). In terms of biological role, member of the eIF2 complex that functions in the early steps of protein synthesis by forming a ternary complex with GTP and initiator tRNA. This complex binds to a 40S ribosomal subunit, followed by mRNA binding to form the 43S pre-initiation complex (43S PIC). Junction of the 60S ribosomal subunit to form the 80S initiation complex is preceded by hydrolysis of the GTP bound to eIF2 and release of an eIF2-GDP binary complex. In order for eIF2 to recycle and catalyze another round of initiation, the GDP bound to eIF2 must exchange with GTP by way of a reaction catalyzed by eIF-2B. This is Eukaryotic translation initiation factor 2 subunit 3 (EIF2S3) from Pongo abelii (Sumatran orangutan).